The sequence spans 115 residues: Ribosomal protein uS4-like (115 aa).

It belongs to the universal ribosomal protein uS4 family.

The chain is Ribosomal protein uS4-like from Azoarcus sp. (strain BH72).